The chain runs to 253 residues: Prepilin leader peptidase/N-methyltransferase (253 aa).

Residues 4-24 (VYLILFSIVSLILGSFSNVVI) form a helical membrane-spanning segment. Zn(2+) contacts are provided by Cys48, Cys51, Cys73, and Cys76. 6 helical membrane-spanning segments follow: residues 80–100 (ISLS…PIYW), 106–126 (VDSF…VIDF), 129–149 (MLLP…YVQQ), 159–179 (IIGG…VRLF), 198–218 (TLIG…IAFI), and 230–250 (CLYI…FFSI).

Belongs to the peptidase A24 family. It depends on Zn(2+) as a cofactor.

It is found in the cell inner membrane. It carries out the reaction Typically cleaves a -Gly-|-Phe- bond to release an N-terminal, basic peptide of 5-8 residues from type IV prepilin, and then N-methylates the new N-terminal amino group, the methyl donor being S-adenosyl-L-methionine.. Functionally, plays an essential role in type IV pili and type II pseudopili formation by proteolytically removing the leader sequence from substrate proteins and subsequently monomethylating the alpha-amino group of the newly exposed N-terminal phenylalanine. The sequence is that of Prepilin leader peptidase/N-methyltransferase (tcpJ) from Vibrio cholerae serotype O1 (strain ATCC 39315 / El Tor Inaba N16961).